A 135-amino-acid polypeptide reads, in one-letter code: Large ribosomal subunit protein uL16c (135 aa).

This sequence belongs to the universal ribosomal protein uL16 family. As to quaternary structure, part of the 50S ribosomal subunit.

It is found in the plastid. The protein resides in the chloroplast. In Populus alba (White poplar), this protein is Large ribosomal subunit protein uL16c.